The sequence spans 211 residues: FMN-dependent NADH:quinone oxidoreductase 2 (211 aa).

Residues Ser-10 and 17–19 contribute to the FMN site; that span reads SRS.

The protein belongs to the azoreductase type 1 family. Homodimer. Requires FMN as cofactor.

It catalyses the reaction 2 a quinone + NADH + H(+) = 2 a 1,4-benzosemiquinone + NAD(+). The enzyme catalyses N,N-dimethyl-1,4-phenylenediamine + anthranilate + 2 NAD(+) = 2-(4-dimethylaminophenyl)diazenylbenzoate + 2 NADH + 2 H(+). Quinone reductase that provides resistance to thiol-specific stress caused by electrophilic quinones. Functionally, also exhibits azoreductase activity. Catalyzes the reductive cleavage of the azo bond in aromatic azo compounds to the corresponding amines. This Listeria monocytogenes serotype 4b (strain F2365) protein is FMN-dependent NADH:quinone oxidoreductase 2.